The chain runs to 161 residues: Regulator of ribonuclease activity A (161 aa).

It belongs to the RraA family. As to quaternary structure, homotrimer. Binds to both RNA-binding sites in the C-terminal region of Rne and to RhlB.

Its subcellular location is the cytoplasm. Functionally, globally modulates RNA abundance by binding to RNase E (Rne) and regulating its endonucleolytic activity. Can modulate Rne action in a substrate-dependent manner by altering the composition of the degradosome. Modulates RNA-binding and helicase activities of the degradosome. The sequence is that of Regulator of ribonuclease activity A from Yersinia enterocolitica serotype O:8 / biotype 1B (strain NCTC 13174 / 8081).